A 320-amino-acid polypeptide reads, in one-letter code: Aspartate carbamoyltransferase catalytic subunit (320 aa).

R70 and T71 together coordinate carbamoyl phosphate. Position 98 (K98) interacts with L-aspartate. Carbamoyl phosphate is bound by residues R120, H149, and Q152. The L-aspartate site is built by R182 and R237. Carbamoyl phosphate-binding residues include G278 and P279.

The protein belongs to the aspartate/ornithine carbamoyltransferase superfamily. ATCase family. In terms of assembly, heterododecamer (2C3:3R2) of six catalytic PyrB chains organized as two trimers (C3), and six regulatory PyrI chains organized as three dimers (R2).

The enzyme catalyses carbamoyl phosphate + L-aspartate = N-carbamoyl-L-aspartate + phosphate + H(+). It functions in the pathway pyrimidine metabolism; UMP biosynthesis via de novo pathway; (S)-dihydroorotate from bicarbonate: step 2/3. Functionally, catalyzes the condensation of carbamoyl phosphate and aspartate to form carbamoyl aspartate and inorganic phosphate, the committed step in the de novo pyrimidine nucleotide biosynthesis pathway. The protein is Aspartate carbamoyltransferase catalytic subunit of Ruthia magnifica subsp. Calyptogena magnifica.